Consider the following 384-residue polypeptide: Lipid-A-disaccharide synthase 1 (384 aa).

It belongs to the LpxB family.

The catalysed reaction is a lipid X + a UDP-2-N,3-O-bis[(3R)-3-hydroxyacyl]-alpha-D-glucosamine = a lipid A disaccharide + UDP + H(+). Its pathway is bacterial outer membrane biogenesis; LPS lipid A biosynthesis. Its function is as follows. Condensation of UDP-2,3-diacylglucosamine and 2,3-diacylglucosamine-1-phosphate to form lipid A disaccharide, a precursor of lipid A, a phosphorylated glycolipid that anchors the lipopolysaccharide to the outer membrane of the cell. In Legionella pneumophila (strain Paris), this protein is Lipid-A-disaccharide synthase 1.